A 537-amino-acid chain; its full sequence is Probable protein kinase UbiB (537 aa).

A helical membrane pass occupies residues 30–47; it reads LLPWWLRALGYLLPWRWL. Residues 126 to 490 form the Protein kinase domain; sequence RFDSEPLASA…KRERHDHHLL (365 aa). Residues 132-140 and lysine 154 each bind ATP; that span reads LASASVAQV. The active-site Proton acceptor is aspartate 289. Helical transmembrane passes span 489 to 507 and 513 to 530; these read LLRLLGAALLAGGVLLALQ and ANAWPSWLMLASGLYLLV.

This sequence belongs to the ABC1 family. UbiB subfamily.

It localises to the cell inner membrane. It functions in the pathway cofactor biosynthesis; ubiquinone biosynthesis [regulation]. Functionally, is probably a protein kinase regulator of UbiI activity which is involved in aerobic coenzyme Q (ubiquinone) biosynthesis. The polypeptide is Probable protein kinase UbiB (Azotobacter vinelandii (strain DJ / ATCC BAA-1303)).